The chain runs to 269 residues: Indole-3-glycerol phosphate synthase (269 aa).

Belongs to the TrpC family.

The catalysed reaction is 1-(2-carboxyphenylamino)-1-deoxy-D-ribulose 5-phosphate + H(+) = (1S,2R)-1-C-(indol-3-yl)glycerol 3-phosphate + CO2 + H2O. Its pathway is amino-acid biosynthesis; L-tryptophan biosynthesis; L-tryptophan from chorismate: step 4/5. In Roseiflexus castenholzii (strain DSM 13941 / HLO8), this protein is Indole-3-glycerol phosphate synthase.